The primary structure comprises 859 residues: Magnesium transporter ALR1 (859 aa).

Residues 1–20 (MSSSSSSSESSPNLSRSNSL) are compositionally biased toward low complexity. 2 disordered regions span residues 1-281 (MSSS…MPPQ) and 330-399 (TSST…NIPS). An N-acetylserine modification is found at S2. 2 stretches are compositionally biased toward basic and acidic residues: residues 28-42 (KTED…RQHP) and 55-73 (KNKE…EQKS). A Phosphotyrosine modification is found at Y77. The residue at position 85 (S85) is a Phosphoserine. Residues 144 to 154 (PPKDVGVKRDY) show a composition bias toward basic and acidic residues. The span at 157-176 (SSSTASSGNKSKLSASSSAS) shows a compositional bias: low complexity. 2 positions are modified to phosphoserine: S185 and S188. Residues 193–203 (IPHESKSDTHS) show a composition bias toward basic and acidic residues. Residues 213–235 (YSTTSAHSSINPAVLLTKSTSQK) are compositionally biased toward polar residues. Residues S220, S221, and S236 each carry the phosphoserine modification. Position 242 is a phosphothreonine (T242). Polar residues predominate over residues 252 to 265 (TRASFDSDVSQASR). Low complexity predominate over residues 330 to 339 (TSSTSTSGSS). Residues 353–375 (EKSESTNETEIHEKKEDEHEKIK) are compositionally biased toward basic and acidic residues. Helical transmembrane passes span 744-764 (TMIG…GMNV) and 773-793 (IAWW…GWFL). A disordered region spans residues 830-859 (FNDRSKNINVRAGPSNKSVASLPSRYSRYD). The residue at position 850 (S850) is a Phosphoserine.

Belongs to the CorA metal ion transporter (MIT) (TC 1.A.35) family.

The protein resides in the cell membrane. In terms of biological role, plasma membrane magnesium transporter. In Saccharomyces cerevisiae (strain ATCC 204508 / S288c) (Baker's yeast), this protein is Magnesium transporter ALR1 (ALR1).